Reading from the N-terminus, the 334-residue chain is Adenosine deaminase (334 aa).

Residues His12 and His14 each contribute to the Zn(2+) site. Positions 14, 16, and 170 each coordinate substrate. His197 is a binding site for Zn(2+). Catalysis depends on Glu200, which acts as the Proton donor. Asp278 is a binding site for Zn(2+). Asp279 provides a ligand contact to substrate.

The protein belongs to the metallo-dependent hydrolases superfamily. Adenosine and AMP deaminases family. Adenosine deaminase subfamily. Zn(2+) is required as a cofactor.

It carries out the reaction adenosine + H2O + H(+) = inosine + NH4(+). The catalysed reaction is 2'-deoxyadenosine + H2O + H(+) = 2'-deoxyinosine + NH4(+). Functionally, catalyzes the hydrolytic deamination of adenosine and 2-deoxyadenosine. The chain is Adenosine deaminase from Vibrio cholerae serotype O1 (strain ATCC 39541 / Classical Ogawa 395 / O395).